The primary structure comprises 237 residues: MKYTLDDFARLIDHTNLHADATEADMKKLCDEAKKYHFKMVAINQVQSKFCSEQLKGTDIDTGAAIAFPLGQQTIESKVFDTRDAIKNGANEIDYVINITQLKAKDYDYIKQEMQEMVNACHENHVPCKVIFENCYLTKDEIKKLAEIAKEVKPDFIKTSTGFGSSGAKVEDVKLMKSIVGDEVKVKAAGGIRNSDDFLAMVRAGADRIGCSAGVKIYQALKCRMKDDHVDSIEIAR.

The active-site Proton donor/acceptor is Asp-94. Lys-158 functions as the Schiff-base intermediate with acetaldehyde in the catalytic mechanism. Lys-187 acts as the Proton donor/acceptor in catalysis.

This sequence belongs to the DeoC/FbaB aldolase family. DeoC type 1 subfamily.

It localises to the cytoplasm. The catalysed reaction is 2-deoxy-D-ribose 5-phosphate = D-glyceraldehyde 3-phosphate + acetaldehyde. The protein operates within carbohydrate degradation; 2-deoxy-D-ribose 1-phosphate degradation; D-glyceraldehyde 3-phosphate and acetaldehyde from 2-deoxy-alpha-D-ribose 1-phosphate: step 2/2. Its function is as follows. Catalyzes a reversible aldol reaction between acetaldehyde and D-glyceraldehyde 3-phosphate to generate 2-deoxy-D-ribose 5-phosphate. The sequence is that of Deoxyribose-phosphate aldolase from Lactobacillus acidophilus (strain ATCC 700396 / NCK56 / N2 / NCFM).